A 456-amino-acid chain; its full sequence is Cell adhesion molecule 1 (456 aa).

The N-terminal stretch at 1–47 (MASAVLPSGSQCAAAAAVAAAAAPPGLRLRLLLLLLSAAALIPTGDG) is a signal peptide. Residues 48–142 (QNLFTKDVTV…PPQESYTTIT (95 aa)) form the Ig-like V-type domain. At 48–388 (QNLFTKDVTV…EEGTIGAVDH (341 aa)) the chain is on the extracellular side. The cysteines at positions 67 and 127 are disulfide-linked. 4 N-linked (GlcNAc...) asparagine glycosylation sites follow: Asn70, Asn104, Asn116, and Asn168. Ig-like C2-type domains are found at residues 147–241 (PRNL…RYLE) and 246–332 (PQVH…YMLY). Cystine bridges form between Cys169-Cys223 and Cys270-Cys316. N-linked (GlcNAc...) asparagine glycans are attached at residues Asn307 and Asn311. Residues 389–409 (AVIGGVVAVVVFAMLCLLIIL) form a helical membrane-spanning segment. Topologically, residues 410-456 (GRYFARHKGTYFTHEAKGADDAADADTAIINAEGGQNNSEEKKEYFI) are cytoplasmic. Thr436 is modified (phosphothreonine). The residue at position 448 (Ser448) is a Phosphoserine.

It belongs to the nectin family. Homodimer (via Ig-like V-type domain). Interacts with FARP1. Interacts (via Ig-like V-type domain) with CRTAM (via Ig-like V-type domain); the interaction competes with CRTAM homodimerization and CADM1 homodimerization. Interacts (via C-terminus) with EPB41L3/DAL1. The interaction with EPB41L3/DAL1 may act to anchor CADM1 to the actin cytoskeleton. Interacts (via C-terminus) with MPP2 (via PDZ domain). Interacts (via C-terminus) with MPP3 (via PDZ domain); this interaction connects CADM1 with DLG1. Interacts (via C-terminus) with PALS2 (via PDZ domain). In terms of processing, N-glycosylated. Glycosylation at Asn-70 and Asn-104 promotes adhesive binding and synapse induction. Expressed dominantly in epithelial cells but not expressed in fibroblast cells (at protein level). Expressed in the T-cell area of lymph nodes, specifically in CD8+ and CD4- CD8- dendritic cells (at protein level). Expressed in CD8+ dendritic cells in the spleen (at protein level). Expressed in CD103+ dendritic cells in the small intestine lamina propria and mesenteric lymph nodes (at protein level). Expressed in brain, lung, kidney, testis, heart, spleen and liver, but not expressed in skeletal muscle.

The protein resides in the cell membrane. It is found in the synaptic cell membrane. Its function is as follows. Mediates homophilic cell-cell adhesion in a Ca(2+)-independent manner. Also mediates heterophilic cell-cell adhesion with CADM3 and NECTIN3 in a Ca(2+)-independent manner. Interaction with CRTAM promotes natural killer (NK) cell cytotoxicity and interferon-gamma (IFN-gamma) secretion by CD8+ T-cells in vitro as well as NK cell-mediated rejection of tumors expressing CADM1 in vivo. In mast cells, may mediate attachment to and promote communication with nerves. CADM1, together with MITF, is essential for development and survival of mast cells in vivo. By interacting with CRTAM and thus promoting the adhesion between CD8+ T-cells and CD8+ dendritic cells, regulates the retention of activated CD8+ T-cell within the draining lymph node. Required for the intestinal retention of intraepithelial CD4+ CD8+ T-cells and, to a lesser extent, intraepithelial and lamina propria CD8+ T-cells and CD4+ T-cells. Interaction with CRTAM promotes the adhesion to gut-associated CD103+ dendritic cells, which may facilitate the expression of gut-homing and adhesion molecules on T-cells and the conversion of CD4+ T-cells into CD4+ CD8+ T-cells. Acts as a synaptic cell adhesion molecule and plays a role in the formation of dendritic spines and in synapse assembly. May be involved in neuronal migration, axon growth, pathfinding, and fasciculation on the axons of differentiating neurons. May play diverse roles in the spermatogenesis including in the adhesion of spermatocytes and spermatids to Sertoli cells and for their normal differentiation into mature spermatozoa. The sequence is that of Cell adhesion molecule 1 from Mus musculus (Mouse).